The sequence spans 187 residues: Elongation factor P (187 aa).

Belongs to the elongation factor P family.

The protein resides in the cytoplasm. Its pathway is protein biosynthesis; polypeptide chain elongation. Its function is as follows. Involved in peptide bond synthesis. Stimulates efficient translation and peptide-bond synthesis on native or reconstituted 70S ribosomes in vitro. Probably functions indirectly by altering the affinity of the ribosome for aminoacyl-tRNA, thus increasing their reactivity as acceptors for peptidyl transferase. The sequence is that of Elongation factor P from Rhodococcus erythropolis (strain PR4 / NBRC 100887).